The following is a 1029-amino-acid chain: 2-oxoglutarate dehydrogenase, mitochondrial (1029 aa).

Thiamine diphosphate-binding residues include arginine 317, aspartate 415, asparagine 448, isoleucine 450, and glutamine 676. Residues aspartate 415, asparagine 448, and isoleucine 450 each coordinate Mg(2+).

The protein belongs to the alpha-ketoglutarate dehydrogenase family. As to quaternary structure, homodimer. Component of the 2-oxoglutarate dehydrogenase complex. The cofactor is thiamine diphosphate. Mg(2+) is required as a cofactor.

It localises to the mitochondrion matrix. It carries out the reaction N(6)-[(R)-lipoyl]-L-lysyl-[protein] + 2-oxoglutarate + H(+) = N(6)-[(R)-S(8)-succinyldihydrolipoyl]-L-lysyl-[protein] + CO2. In terms of biological role, the 2-oxoglutarate dehydrogenase complex catalyzes the overall conversion of 2-oxoglutarate to succinyl-CoA and CO(2). It contains multiple copies of three enzymatic components: 2-oxoglutarate dehydrogenase (E1), dihydrolipoamide succinyltransferase (E2) and lipoamide dehydrogenase (E3). The polypeptide is 2-oxoglutarate dehydrogenase, mitochondrial (ogdh-1) (Caenorhabditis elegans).